The chain runs to 483 residues: Allantoate deiminase 2 (483 aa).

Positions 1 to 30 (MSSATASNTFFLHSCFLLFCLLSAPSCVSM) are cleaved as a signal peptide. The Mn(2+) site is built by His125, Asp136, Glu173, His239, and His457.

This sequence belongs to the peptidase M20A family. As to quaternary structure, homodimer. Mn(2+) serves as cofactor. In terms of tissue distribution, expressed in stems and leaves, and at low levels in roots. Not detected in nodules.

The protein localises to the endoplasmic reticulum. The enzyme catalyses allantoate + H2O + 2 H(+) = (S)-2-ureidoglycine + NH4(+) + CO2. In terms of biological role, involved in the catabolism of purine nucleotides. Can use allantoate as substrate. The sequential activity of AAH, UGLYAH and UAH allows a complete purine breakdown without the intermediate generation of urea. The protein is Allantoate deiminase 2 of Glycine max (Soybean).